Here is a 551-residue protein sequence, read N- to C-terminus: C6 finger transcription factor imqK (551 aa).

Positions 11–53 (CDRCRGQKLRCVRLPGPAREDSPRSARSVNQPCERCKRAKVVC) form a DNA-binding region, zn(2)-C6 fungal-type. Disordered stretches follow at residues 280–302 (RQGM…TSPS) and 351–378 (NEYS…RISA). Low complexity predominate over residues 351-369 (NEYSSSRSQSRNHSTSASS).

It localises to the nucleus. Functionally, C6 finger transcription factor that positively regulates the cluster that mediates the biosynthesis of imizoquins A to D, tripeptide-derived alkaloids that serve a protective role against oxidative stress that are essential for normal germination. This is C6 finger transcription factor imqK from Aspergillus flavus (strain ATCC 200026 / FGSC A1120 / IAM 13836 / NRRL 3357 / JCM 12722 / SRRC 167).